The sequence spans 347 residues: Quinolinate synthase (347 aa).

The iminosuccinate site is built by His-47 and Ser-68. Residue Cys-113 participates in [4Fe-4S] cluster binding. Residues 139 to 141 (YAN) and Ser-156 contribute to the iminosuccinate site. Cys-200 provides a ligand contact to [4Fe-4S] cluster. Iminosuccinate is bound by residues 226–228 (HPE) and Thr-243. Position 297 (Cys-297) interacts with [4Fe-4S] cluster.

It belongs to the quinolinate synthase family. Type 1 subfamily. [4Fe-4S] cluster serves as cofactor.

It localises to the cytoplasm. The enzyme catalyses iminosuccinate + dihydroxyacetone phosphate = quinolinate + phosphate + 2 H2O + H(+). Its pathway is cofactor biosynthesis; NAD(+) biosynthesis; quinolinate from iminoaspartate: step 1/1. Its function is as follows. Catalyzes the condensation of iminoaspartate with dihydroxyacetone phosphate to form quinolinate. The chain is Quinolinate synthase from Salmonella agona (strain SL483).